The following is a 432-amino-acid chain: Tyrosine-protein phosphatase non-receptor type 1 (432 aa).

Met-1 bears the N-acetylmethionine mark. The Tyrosine-protein phosphatase domain maps to 3-277 (MEKEFEQIDK…RFSYLAVIEG (275 aa)). Phosphotyrosine is present on Tyr-20. At Ser-50 the chain carries Phosphoserine; by PKB/AKT1, CLK1 and CLK2. At Tyr-66 the chain carries Phosphotyrosine; by EGFR. Residues Asp-181 and 215-221 (CSAGIGR) each bind substrate. The active-site Phosphocysteine intermediate is the Cys-215. Residue Cys-215 is modified to Cysteine persulfide. Cys-215 carries the post-translational modification S-nitrosocysteine; in reversibly inhibited form. Phosphoserine; by CLK1 and CLK2 is present on residues Ser-242 and Ser-243. Position 262 (Gln-262) interacts with substrate. Residues 297-322 (EDLEPPPEHVPPPPRPPKRTLEPHNG) form a disordered region. Residues Ser-335, Ser-362, and Ser-364 each carry the phosphoserine modification. The segment at 350-402 (SRAPSIAVHSMSSMSQDTEVRKRMVGGGLQSAQASVPTEEELSPTEEEQKAHR) is disordered. At Thr-367 the chain carries Phosphothreonine.

Belongs to the protein-tyrosine phosphatase family. Non-receptor class 1 subfamily. Interacts with EPHA3 (phosphorylated); dephosphorylates EPHA3 and may regulate its trafficking and function. Interacts with MET. Interacts with NCK1. Ser-50 is the major site of phosphorylation as compared to Ser-242 and Ser-243. Activated by phosphorylation at Ser-50. Post-translationally, S-nitrosylation of Cys-215 inactivates the enzyme activity. In terms of processing, sulfhydration at Cys-215 following endoplasmic reticulum stress inactivates the enzyme activity, promoting EIF2AK3/PERK activity. In terms of tissue distribution, found in several tissues including central nervous system, liver and kidney. A high level of expression was found in the hippocampus.

The protein localises to the endoplasmic reticulum membrane. It carries out the reaction O-phospho-L-tyrosyl-[protein] + H2O = L-tyrosyl-[protein] + phosphate. In terms of biological role, tyrosine-protein phosphatase which acts as a regulator of endoplasmic reticulum unfolded protein response. Mediates dephosphorylation of EIF2AK3/PERK; inactivating the protein kinase activity of EIF2AK3/PERK. May play an important role in CKII- and p60c-src-induced signal transduction cascades. May regulate the EFNA5-EPHA3 signaling pathway which modulates cell reorganization and cell-cell repulsion. May also regulate the hepatocyte growth factor receptor signaling pathway through dephosphorylation of MET. In Rattus norvegicus (Rat), this protein is Tyrosine-protein phosphatase non-receptor type 1 (Ptpn1).